We begin with the raw amino-acid sequence, 299 residues long: tRNA dimethylallyltransferase (299 aa).

An ATP-binding site is contributed by 11–18 (GPTAVGKT). Residue 13-18 (TAVGKT) participates in substrate binding. Residues 36–39 (DSQQ) are interaction with substrate tRNA.

The protein belongs to the IPP transferase family. In terms of assembly, monomer. Mg(2+) is required as a cofactor.

The catalysed reaction is adenosine(37) in tRNA + dimethylallyl diphosphate = N(6)-dimethylallyladenosine(37) in tRNA + diphosphate. Its function is as follows. Catalyzes the transfer of a dimethylallyl group onto the adenine at position 37 in tRNAs that read codons beginning with uridine, leading to the formation of N6-(dimethylallyl)adenosine (i(6)A). This chain is tRNA dimethylallyltransferase, found in Streptococcus pyogenes serotype M4 (strain MGAS10750).